The following is an 887-amino-acid chain: Valine--tRNA ligase (887 aa).

The 'HIGH' region signature appears at 45–55 (PNVTGILHMGH). The 'KMSKS' region motif lies at 528 to 532 (KMSKS). Lysine 531 contacts ATP. Positions 817 to 887 (TGLLNNEAEI…LKESLKSFEE (71 aa)) form a coiled coil.

The protein belongs to the class-I aminoacyl-tRNA synthetase family. ValS type 1 subfamily. As to quaternary structure, monomer.

The protein localises to the cytoplasm. The catalysed reaction is tRNA(Val) + L-valine + ATP = L-valyl-tRNA(Val) + AMP + diphosphate. In terms of biological role, catalyzes the attachment of valine to tRNA(Val). As ValRS can inadvertently accommodate and process structurally similar amino acids such as threonine, to avoid such errors, it has a 'posttransfer' editing activity that hydrolyzes mischarged Thr-tRNA(Val) in a tRNA-dependent manner. This chain is Valine--tRNA ligase, found in Fusobacterium nucleatum subsp. nucleatum (strain ATCC 25586 / DSM 15643 / BCRC 10681 / CIP 101130 / JCM 8532 / KCTC 2640 / LMG 13131 / VPI 4355).